The chain runs to 203 residues: Outer-membrane lipoprotein carrier protein (203 aa).

An N-terminal signal peptide occupies residues 1-21; sequence MKKMAIACALLSSVVASSVWA. Residues 178-203 are disordered; sequence QQNGAVDPSKFTFTPPQGVTIDDQRK.

Belongs to the LolA family. In terms of assembly, monomer.

Its subcellular location is the periplasm. Participates in the translocation of lipoproteins from the inner membrane to the outer membrane. Only forms a complex with a lipoprotein if the residue after the N-terminal Cys is not an aspartate (The Asp acts as a targeting signal to indicate that the lipoprotein should stay in the inner membrane). The chain is Outer-membrane lipoprotein carrier protein from Salmonella agona (strain SL483).